Consider the following 377-residue polypeptide: Protein RecA (377 aa).

76–83 (GPESSGKT) is a binding site for ATP.

Belongs to the RecA family.

It is found in the cytoplasm. Can catalyze the hydrolysis of ATP in the presence of single-stranded DNA, the ATP-dependent uptake of single-stranded DNA by duplex DNA, and the ATP-dependent hybridization of homologous single-stranded DNAs. It interacts with LexA causing its activation and leading to its autocatalytic cleavage. The polypeptide is Protein RecA (Corynebacterium aurimucosum (strain ATCC 700975 / DSM 44827 / CIP 107346 / CN-1) (Corynebacterium nigricans)).